A 206-amino-acid polypeptide reads, in one-letter code: Thymidylate kinase (206 aa).

Position 10–17 (10–17) interacts with ATP; it reads GVDGVGKT.

It belongs to the thymidylate kinase family.

It catalyses the reaction dTMP + ATP = dTDP + ADP. In terms of biological role, phosphorylation of dTMP to form dTDP in both de novo and salvage pathways of dTTP synthesis. This is Thymidylate kinase from Bifidobacterium longum (strain NCC 2705).